Here is a 173-residue protein sequence, read N- to C-terminus: Ribosome maturation factor RimM (173 aa).

The PRC barrel domain occupies 78-157 (EEEFYLADLI…VLVVPPEEVE (80 aa)). The disordered stretch occupies residues 152–173 (PPEEVEAQEPPEKDAGGDEPSP).

Belongs to the RimM family. As to quaternary structure, binds ribosomal protein uS19.

The protein localises to the cytoplasm. Functionally, an accessory protein needed during the final step in the assembly of 30S ribosomal subunit, possibly for assembly of the head region. Essential for efficient processing of 16S rRNA. May be needed both before and after RbfA during the maturation of 16S rRNA. It has affinity for free ribosomal 30S subunits but not for 70S ribosomes. The chain is Ribosome maturation factor RimM from Beijerinckia indica subsp. indica (strain ATCC 9039 / DSM 1715 / NCIMB 8712).